We begin with the raw amino-acid sequence, 846 residues long: Integrin beta-PS (846 aa).

The signal sequence occupies residues 1–28; sequence MILERNRRCQLALLMIAILAAIAGQTDA. Over 29 to 777 the chain is Extracellular; that stretch reads QKAAKLTAVS…NKECPAKVFM (749 aa). Residues cysteine 46 and cysteine 55 are joined by a disulfide bond. An N-linked (GlcNAc...) asparagine glycan is attached at asparagine 72. The region spanning 186–419 is the VWFA domain; it reads DLYYLMDLSK…ELVKEEYRKI (234 aa). Residues cysteine 249 and cysteine 252 are joined by a disulfide bond. 2 N-linked (GlcNAc...) asparagine glycosylation sites follow: asparagine 266 and asparagine 277. Cysteine 300 and cysteine 341 form a disulfide bridge. 2 N-linked (GlcNAc...) asparagine glycosylation sites follow: asparagine 403 and asparagine 428. 21 cysteine pairs are disulfide-bonded: cysteine 441–cysteine 453, cysteine 473–cysteine 741, cysteine 507–cysteine 530, cysteine 522–cysteine 533, cysteine 535–cysteine 544, cysteine 546–cysteine 579, cysteine 561–cysteine 577, cysteine 571–cysteine 582, cysteine 584–cysteine 599, cysteine 601–cysteine 624, cysteine 606–cysteine 622, cysteine 614–cysteine 627, cysteine 629–cysteine 638, cysteine 640–cysteine 664, cysteine 647–cysteine 662, cysteine 656–cysteine 667, cysteine 669–cysteine 682, cysteine 685–cysteine 688, cysteine 692–cysteine 701, cysteine 698–cysteine 771, and cysteine 719–cysteine 749. I-EGF domains lie at 507–545, 546–600, 601–639, and 640–683; these read CENPGSIGYQVQANSCSGHGTSMCGICNCDDSYFGNKCE, CSAT…KHCE, CDNFSCERNRNQLCSGPDHGTCECGRCKCKPGWTGSNCG, and CQES…RHCE. Asparagine 557 carries an N-linked (GlcNAc...) asparagine glycan. N-linked (GlcNAc...) asparagine glycosylation is present at asparagine 603. Residue asparagine 644 is glycosylated (N-linked (GlcNAc...) asparagine). The N-linked (GlcNAc...) asparagine glycan is linked to asparagine 718. Residues 778–798 form a helical membrane-spanning segment; sequence LGIVMGVIAAIVLVGLAILLL. At 799–846 the chain is on the cytoplasmic side; sequence WKLLTTIHDRREFARFEKERMNAKWDTGENPIYKQATSTFKNPMYAGK. A phosphotyrosine mark is found at tyrosine 831 and tyrosine 843.

Belongs to the integrin beta chain family. In terms of assembly, heterodimer of an alpha and a beta subunit. Beta-PS associates with either alpha-PS1, alpha-PS2, alpha-PS3, alpha-PS4 or alpha-PS5. As to expression, in ovaries, strongly expressed in follicle cells. In oocytes, expressed in the forming dorsal appendages (at protein level). Expressed in the embryonic dorsal cuticle, the larval eye and the wing imaginal disk. In testes, detected at the interface between somatic hub cells and cyst stem cells.

It localises to the cell membrane. The protein resides in the apical cell membrane. Its subcellular location is the lateral cell membrane. It is found in the basal cell membrane. Functionally, integrin alpha-PS1/beta-PS is a receptor for laminin. Integrin alpha-PS2/beta-PS is a receptor for Tig, wb and Ten-m. Contributes to endodermal integrity and adhesion between the midgut epithelium and the surrounding visceral muscle. Essential for migration of the primordial midgut cells and for maintaining, but not establishing, cell polarity in the midgut epithelium. The two beta subunits mediate midgut migration by distinct mechanisms: beta-PS requires rhea/talin and Itgbn does not. Required for rhea/talin correct cellular localization in the midgut. Required for many embryonic (dorsal closure and somatic muscle attachments) and postembryonic developmental processes (attachment between cell layers of imaginal disks, organization of ommatidial arrays and flight muscle development). Involved in the function and/or development of the olfactory system. In the testes, essential for shv-dependent maintenance of somatic hub cells and their localization to the apical tip. Plays a role in timely border cell migration during oogenesis. The polypeptide is Integrin beta-PS (mys) (Drosophila melanogaster (Fruit fly)).